A 284-amino-acid chain; its full sequence is Diaminopimelate epimerase (284 aa).

Substrate contacts are provided by Asn-21, Gln-54, and Asn-74. Cys-83 serves as the catalytic Proton donor. Substrate-binding positions include 84–85, Asn-167, Asn-200, and 218–219; these read GN and ER. Residue Cys-227 is the Proton acceptor of the active site. 228–229 is a substrate binding site; sequence GS.

This sequence belongs to the diaminopimelate epimerase family. Homodimer.

The protein resides in the cytoplasm. It catalyses the reaction (2S,6S)-2,6-diaminopimelate = meso-2,6-diaminopimelate. Its pathway is amino-acid biosynthesis; L-lysine biosynthesis via DAP pathway; DL-2,6-diaminopimelate from LL-2,6-diaminopimelate: step 1/1. In terms of biological role, catalyzes the stereoinversion of LL-2,6-diaminopimelate (L,L-DAP) to meso-diaminopimelate (meso-DAP), a precursor of L-lysine and an essential component of the bacterial peptidoglycan. The protein is Diaminopimelate epimerase of Buchnera aphidicola subsp. Acyrthosiphon pisum (strain 5A).